The following is a 115-amino-acid chain: Large ribosomal subunit protein bL19 (115 aa).

This sequence belongs to the bacterial ribosomal protein bL19 family.

In terms of biological role, this protein is located at the 30S-50S ribosomal subunit interface and may play a role in the structure and function of the aminoacyl-tRNA binding site. The sequence is that of Large ribosomal subunit protein bL19 from Clostridium kluyveri (strain ATCC 8527 / DSM 555 / NBRC 12016 / NCIMB 10680 / K1).